Reading from the N-terminus, the 413-residue chain is S-adenosylmethionine synthase (413 aa).

His15 serves as a coordination point for ATP. Residue Asp17 coordinates Mg(2+). Glu43 is a binding site for K(+). Positions 56 and 100 each coordinate L-methionine. The tract at residues Gln100–Asp110 is flexible loop. Residues Asp171–Lys173, Lys248–Phe249, Asp257, Arg263–Lys264, Ala280, and Lys284 each bind ATP. Position 257 (Asp257) interacts with L-methionine. An L-methionine-binding site is contributed by Lys288.

This sequence belongs to the AdoMet synthase family. In terms of assembly, homotetramer; dimer of dimers. Mg(2+) serves as cofactor. Requires K(+) as cofactor.

Its subcellular location is the cytoplasm. It carries out the reaction L-methionine + ATP + H2O = S-adenosyl-L-methionine + phosphate + diphosphate. It functions in the pathway amino-acid biosynthesis; S-adenosyl-L-methionine biosynthesis; S-adenosyl-L-methionine from L-methionine: step 1/1. In terms of biological role, catalyzes the formation of S-adenosylmethionine (AdoMet) from methionine and ATP. The overall synthetic reaction is composed of two sequential steps, AdoMet formation and the subsequent tripolyphosphate hydrolysis which occurs prior to release of AdoMet from the enzyme. In Prochlorococcus marinus (strain MIT 9301), this protein is S-adenosylmethionine synthase.